A 119-amino-acid polypeptide reads, in one-letter code: Large ribosomal subunit protein bL20 (119 aa).

The protein belongs to the bacterial ribosomal protein bL20 family.

Functionally, binds directly to 23S ribosomal RNA and is necessary for the in vitro assembly process of the 50S ribosomal subunit. It is not involved in the protein synthesizing functions of that subunit. The protein is Large ribosomal subunit protein bL20 of Caldanaerobacter subterraneus subsp. tengcongensis (strain DSM 15242 / JCM 11007 / NBRC 100824 / MB4) (Thermoanaerobacter tengcongensis).